Reading from the N-terminus, the 160-residue chain is Transcription antitermination protein NusB (160 aa).

This sequence belongs to the NusB family.

In terms of biological role, involved in transcription antitermination. Required for transcription of ribosomal RNA (rRNA) genes. Binds specifically to the boxA antiterminator sequence of the ribosomal RNA (rrn) operons. The protein is Transcription antitermination protein NusB of Rhizobium etli (strain ATCC 51251 / DSM 11541 / JCM 21823 / NBRC 15573 / CFN 42).